A 137-amino-acid chain; its full sequence is Putative pre-16S rRNA nuclease (137 aa).

This sequence belongs to the YqgF nuclease family.

The protein localises to the cytoplasm. In terms of biological role, could be a nuclease involved in processing of the 5'-end of pre-16S rRNA. This chain is Putative pre-16S rRNA nuclease, found in Clostridium botulinum (strain 657 / Type Ba4).